The primary structure comprises 169 residues: Type II secretion system protein H (169 aa).

A propeptide spans M1–E29 (leader sequence). M30 carries the post-translational modification N-methylmethionine. The helical transmembrane segment at L32 to I52 threads the bilayer.

Belongs to the GSP H family. As to quaternary structure, type II secretion is composed of four main components: the outer membrane complex, the inner membrane complex, the cytoplasmic secretion ATPase and the periplasm-spanning pseudopilus. Interacts with core component XpsG. Interacts with minor pseudopilins XpsI and XpsJ. In terms of processing, cleaved by prepilin peptidase. Methylated by prepilin peptidase at the amino group of the N-terminal phenylalanine once the leader sequence is cleaved by prepilin peptidase.

Its subcellular location is the cell inner membrane. Its function is as follows. Component of the type II secretion system required for the energy-dependent secretion of extracellular factors such as proteases and toxins from the periplasm. Part of the pseudopilus tip complex that is critical for the recognition and binding of secretion substrates. The chain is Type II secretion system protein H (xpsH) from Xanthomonas campestris pv. campestris (strain ATCC 33913 / DSM 3586 / NCPPB 528 / LMG 568 / P 25).